Here is a 125-residue protein sequence, read N- to C-terminus: Cystatin-like cysteine protease inhibitor EPIC2B (125 aa).

An N-terminal signal peptide occupies residues Met-1 to Ala-21. An N-linked (GlcNAc...) asparagine glycan is attached at Asn-45. The Secondary area of contact motif lies at Gln-68–Gly-72.

The protein belongs to the cystatin family. Interacts with the host papain-like cysteine protease PIP1. Interacts with the host papain-like cysteine protease RCR3. Interacts with the host papain-like cysteine protease C14.

Its subcellular location is the secreted. Its function is as follows. Secreted effector that interacts with and inhibits the pathogenesis-related papain-like cysteine proteases C14, PIP1 and RCR3 of host plants. Inhibition of host proteases by a pathogen extracellular protease inhibitor forms a specific type of defense-counterdefense mechanism between plants and microbial pathogens. The sequence is that of Cystatin-like cysteine protease inhibitor EPIC2B from Phytophthora infestans (strain T30-4) (Potato late blight agent).